The sequence spans 525 residues: GMP synthase [glutamine-hydrolyzing] (525 aa).

A Glutamine amidotransferase type-1 domain is found at 8 to 207 (KILILDFGSQ…ALDICGCAAN (200 aa)). C85 (nucleophile) is an active-site residue. Catalysis depends on residues H181 and E183. The GMPS ATP-PPase domain occupies 208–400 (WKPSSIIEDA…LGLPYNMLYR (193 aa)). 235 to 241 (SGGVDSS) is an ATP binding site.

In terms of assembly, homodimer.

The enzyme catalyses XMP + L-glutamine + ATP + H2O = GMP + L-glutamate + AMP + diphosphate + 2 H(+). The protein operates within purine metabolism; GMP biosynthesis; GMP from XMP (L-Gln route): step 1/1. Catalyzes the synthesis of GMP from XMP. In Shewanella sp. (strain ANA-3), this protein is GMP synthase [glutamine-hydrolyzing].